Reading from the N-terminus, the 214-residue chain is Phosphoenolpyruvate guanylyltransferase (214 aa).

Residues Thr148, Gly163, and Ser166 each coordinate phosphoenolpyruvate.

The protein belongs to the CofC family.

The catalysed reaction is phosphoenolpyruvate + GTP + H(+) = enolpyruvoyl-2-diphospho-5'-guanosine + diphosphate. It functions in the pathway cofactor biosynthesis; coenzyme F420 biosynthesis. Guanylyltransferase that catalyzes the activation of phosphoenolpyruvate (PEP) as enolpyruvoyl-2-diphospho-5'-guanosine, via the condensation of PEP with GTP. It is involved in the biosynthesis of coenzyme F420, a hydride carrier cofactor. The sequence is that of Phosphoenolpyruvate guanylyltransferase from Mycobacterium tuberculosis (strain KZN 1435 / MDR).